The primary structure comprises 159 residues: MTKSQKIELVSKLEEGFKASEAVVVCNYKGLNTKKLEELRNNAREMDVKVQIIKNTLASIALKNAGKDGMELKDTNIYLWGEDQLNVSKVADKFSEANQTFEIKTAFIDGEVASVDKVKALAKMPSRNELLAMLLQVWNAPITNFTIGLNALKEKKEAE.

It belongs to the universal ribosomal protein uL10 family. Part of the ribosomal stalk of the 50S ribosomal subunit. The N-terminus interacts with L11 and the large rRNA to form the base of the stalk. The C-terminus forms an elongated spine to which L12 dimers bind in a sequential fashion forming a multimeric L10(L12)X complex.

Functionally, forms part of the ribosomal stalk, playing a central role in the interaction of the ribosome with GTP-bound translation factors. In Campylobacter lari (strain RM2100 / D67 / ATCC BAA-1060), this protein is Large ribosomal subunit protein uL10.